The primary structure comprises 345 residues: N(4)-(Beta-N-acetylglucosaminyl)-L-asparaginase (345 aa).

A signal peptide spans 1-23; that stretch reads MARKWNLPFLLLPLVLGIPLVRG. The N-linked (GlcNAc...) asparagine glycan is linked to Asn38. Cys64 and Cys69 are oxidised to a cystine. An N-linked (GlcNAc...) asparagine glycan is attached at Asn149. Cys163 and Cys179 are joined by a disulfide. The active-site Nucleophile is the Thr205. Residues 233–236 and 256–259 each bind substrate; these read RVGD and TGDG. The cysteines at positions 285 and 305 are disulfide-linked. Residue Asn307 is glycosylated (N-linked (GlcNAc...) asparagine). A disulfide bond links Cys316 and Cys344.

It belongs to the Ntn-hydrolase family. As to quaternary structure, heterotetramer of two alpha and two beta chains arranged as a dimer of alpha/beta heterodimers. In terms of processing, N-glycosylated. Post-translationally, cleaved into an alpha and beta chain by autocatalysis; this activates the enzyme. The N-terminal residue of the beta subunit is responsible for the nucleophile hydrolase activity.

It is found in the lysosome. The enzyme catalyses N(4)-(beta-N-acetyl-D-glucosaminyl)-L-asparagine + H2O = N-acetyl-beta-D-glucosaminylamine + L-aspartate + H(+). Functionally, cleaves the GlcNAc-Asn bond which joins oligosaccharides to the peptide of asparagine-linked glycoproteins. The chain is N(4)-(Beta-N-acetylglucosaminyl)-L-asparaginase (Aga) from Rattus norvegicus (Rat).